The following is a 56-amino-acid chain: Protein YqiD (56 aa).

Residues F2–L22 traverse the membrane as a helical segment.

It localises to the cell inner membrane. The polypeptide is Protein YqiD (Escherichia coli (strain K12)).